The following is a 95-amino-acid chain: Alpha-conotoxin VxXXB (95 aa).

The signal sequence occupies residues 1–24 (MPKLAVVLLVLLILPLSYFDAAGG). Residues 25–45 (QAVQGDWRGNRLARDLQRGGR) constitute a propeptide that is removed on maturation. A 4-carboxyglutamate mark is found at Glu48 and Glu50. Residue Pro59 is modified to 4-hydroxyproline; partial. Cystine bridges form between Cys64-Cys73, Cys69-Cys81, Cys74-Cys91, and Cys79-Cys93. At Pro75 the chain carries 4-hydroxyproline; partial. Pro94 carries the 4-hydroxyproline; partial modification. Pro94 is modified (proline amide; in form [desGly-95]VxXXB).

It belongs to the conotoxin D superfamily. Homodimer. Pseudo-homodimer (identical sequence, different post-translational modifications). As to expression, expressed by the venom duct.

The protein localises to the secreted. In terms of biological role, alpha-conotoxins act on postsynaptic membranes, they bind to the nicotinic acetylcholine receptors (nAChR) and thus inhibit them. Through its two C-terminal domains, this homodimeric protein would bind to two nAChR allosteric sites, located outside the nAChR C-loop of the principal binding face and at the adjacent binding interface in a clockwise direction. It specifically blocks mammalian neuronal nAChR of the alpha-7/CHRNA7 (IC(50)=0.4 nM), alpha-3-beta-2/CHRNA3-CHRNB2 (IC(50)=8.4 nM) and alpha-4-beta-2/CHRNA4-CHRNB2 (IC(50)=228 nM) subtypes. It inhibits alpha-7/CHRNA7, alpha-3-beta-2/CHRNA3-CHRNB2 and alpha-4-beta-2/CHRNA4-CHRNB2 nAChR subtypes more efficiently than VxXXA and VxXXC. This is Alpha-conotoxin VxXXB from Conus vexillum (Flag cone).